A 320-amino-acid chain; its full sequence is tRNA(Ile)-lysidine synthase, chloroplastic (320 aa).

Position 31–36 (31–36 (SGGKDS)) interacts with ATP.

It belongs to the tRNA(Ile)-lysidine synthase family.

The protein localises to the plastid. Its subcellular location is the chloroplast. It catalyses the reaction cytidine(34) in tRNA(Ile2) + L-lysine + ATP = lysidine(34) in tRNA(Ile2) + AMP + diphosphate + H(+). Its function is as follows. Ligates lysine onto the cytidine present at position 34 of the AUA codon-specific tRNA(Ile) that contains the anticodon CAU, in an ATP-dependent manner. Cytidine is converted to lysidine, thus changing the amino acid specificity of the tRNA from methionine to isoleucine. This Gracilaria tenuistipitata var. liui (Red alga) protein is tRNA(Ile)-lysidine synthase, chloroplastic.